Consider the following 195-residue polypeptide: Replication restart protein PriC (195 aa).

The protein belongs to the PriC family. As to quaternary structure, monomer. Component of the replication restart primosome, which is composed of PriA, PriB, PriC, DnaB and DnaT; DnaG primase associates transiently with this complex. Interacts with the C-terminus of SSB; this interaction is required to load the main replicative helicase onto substrate replication forks. Interacts with helicase DnaB alone and in the DnaB-DnaC complex, probably 1:1 binding with DnaB.

Functionally, involved in the restart of stalled replication forks, which reloads the DnaB replicative helicase on sites other than the origin of replication. Recognizes abandoned replication forks and remodels DNA single-stranded binding protein (SSB) on ssDNA to uncover a loading site for DnaB. There are several restart pathways, the PriA-PriC pathway is a minor restart pathway. Part of the minor PriC-Rep pathway for restart of stalled replication forks, which has a different substrate specificity than PriA. Part of the major restart pathway with PriA, PriB, DnaB, DnaT and DnaG primase. priB and priC have redundant roles in the cell. This is Replication restart protein PriC from Haemophilus influenzae (strain ATCC 51907 / DSM 11121 / KW20 / Rd).